The chain runs to 537 residues: Putative cysteine ligase BshC (537 aa).

A coiled-coil region spans residues 417-457; the sequence is ASEQFLNELDQLEAQQKETYERLAAEVQGNEDNKNLVEKNN.

The protein belongs to the BshC family.

Involved in bacillithiol (BSH) biosynthesis. May catalyze the last step of the pathway, the addition of cysteine to glucosamine malate (GlcN-Mal) to generate BSH. The protein is Putative cysteine ligase BshC of Staphylococcus carnosus (strain TM300).